A 332-amino-acid chain; its full sequence is Ferredoxin--NADP reductase (332 aa).

FAD is bound by residues Glu-35, Gln-43, Tyr-48, Val-88, Phe-122, Asp-286, and Ser-326.

It belongs to the ferredoxin--NADP reductase type 2 family. As to quaternary structure, homodimer. It depends on FAD as a cofactor.

The catalysed reaction is 2 reduced [2Fe-2S]-[ferredoxin] + NADP(+) + H(+) = 2 oxidized [2Fe-2S]-[ferredoxin] + NADPH. The chain is Ferredoxin--NADP reductase from Limosilactobacillus reuteri (strain DSM 20016) (Lactobacillus reuteri).